Consider the following 668-residue polypeptide: DNA ligase (668 aa).

NAD(+)-binding positions include 32 to 36 (DAEYD), 81 to 82 (SL), and glutamate 113. The N6-AMP-lysine intermediate role is filled by lysine 115. Arginine 136, glutamate 173, lysine 289, and lysine 313 together coordinate NAD(+). Zn(2+) is bound by residues cysteine 407, cysteine 410, cysteine 425, and cysteine 431. The region spanning 590 to 668 (ASEQPFAGKT…EEELQQALQG (79 aa)) is the BRCT domain.

It belongs to the NAD-dependent DNA ligase family. LigA subfamily. The cofactor is Mg(2+). It depends on Mn(2+) as a cofactor.

It catalyses the reaction NAD(+) + (deoxyribonucleotide)n-3'-hydroxyl + 5'-phospho-(deoxyribonucleotide)m = (deoxyribonucleotide)n+m + AMP + beta-nicotinamide D-nucleotide.. Its function is as follows. DNA ligase that catalyzes the formation of phosphodiester linkages between 5'-phosphoryl and 3'-hydroxyl groups in double-stranded DNA using NAD as a coenzyme and as the energy source for the reaction. It is essential for DNA replication and repair of damaged DNA. The polypeptide is DNA ligase (Aeromonas hydrophila subsp. hydrophila (strain ATCC 7966 / DSM 30187 / BCRC 13018 / CCUG 14551 / JCM 1027 / KCTC 2358 / NCIMB 9240 / NCTC 8049)).